Reading from the N-terminus, the 264-residue chain is 3-methyl-2-oxobutanoate hydroxymethyltransferase (264 aa).

2 residues coordinate Mg(2+): aspartate 45 and aspartate 84. 3-methyl-2-oxobutanoate contacts are provided by residues 45–46 (DS), aspartate 84, and lysine 112. Glutamate 114 serves as a coordination point for Mg(2+). The active-site Proton acceptor is the glutamate 181.

The protein belongs to the PanB family. Homodecamer; pentamer of dimers. Mg(2+) is required as a cofactor.

Its subcellular location is the cytoplasm. The enzyme catalyses 3-methyl-2-oxobutanoate + (6R)-5,10-methylene-5,6,7,8-tetrahydrofolate + H2O = 2-dehydropantoate + (6S)-5,6,7,8-tetrahydrofolate. It functions in the pathway cofactor biosynthesis; (R)-pantothenate biosynthesis; (R)-pantoate from 3-methyl-2-oxobutanoate: step 1/2. Its function is as follows. Catalyzes the reversible reaction in which hydroxymethyl group from 5,10-methylenetetrahydrofolate is transferred onto alpha-ketoisovalerate to form ketopantoate. The sequence is that of 3-methyl-2-oxobutanoate hydroxymethyltransferase from Shewanella sp. (strain MR-4).